The primary structure comprises 277 residues: Zinc finger protein 511 (277 aa).

C2H2-type zinc fingers lie at residues 96–121 (FRCH…NALH), 123–146 (NVCS…LEWH), and 160–185 (YECL…IRTH). A disordered region spans residues 225–244 (ESSESMDFSLTPEPVETEPM).

The protein belongs to the krueppel C2H2-type zinc-finger protein family.

It is found in the nucleus. In terms of biological role, may be involved in transcriptional regulation. The chain is Zinc finger protein 511 (znf511) from Danio rerio (Zebrafish).